Consider the following 412-residue polypeptide: uncharacterized protein (412 aa).

[4Fe-4S] cluster contacts are provided by Cys62, Cys68, Cys71, and Cys143. Positions 243, 270, 290, and 338 each coordinate S-adenosyl-L-methionine. The active-site Nucleophile is the Cys364.

The protein belongs to the class I-like SAM-binding methyltransferase superfamily. RNA M5U methyltransferase family.

This is an uncharacterized protein from Mesorhizobium japonicum (strain LMG 29417 / CECT 9101 / MAFF 303099) (Mesorhizobium loti (strain MAFF 303099)).